Reading from the N-terminus, the 315-residue chain is Olfactory receptor 2V1 (315 aa).

A run of 7 helical transmembrane segments spans residues 31-51, 59-79, 100-120, 145-165, 196-216, 239-259, and 273-293; these read TVML…LLIY, PMYF…CNIV, IQIG…GLMA, IAGS…VAAM, FDTL…SIIV, LATC…AMFI, and KVVS…IYSL. Cysteine 98 and cysteine 180 form a disulfide bridge.

It belongs to the G-protein coupled receptor 1 family.

The protein resides in the cell membrane. Functionally, odorant receptor. Activated by (+) and (-)-limonene. The sequence is that of Olfactory receptor 2V1 from Mus musculus (Mouse).